The chain runs to 254 residues: Inner membrane protein YabI (254 aa).

Over 1–7 the chain is Periplasmic; the sequence is MQALLEH. A run of 2 helical transmembrane segments spans residues 8–28 and 29–49; these read FITQSTVYSLMAVVLVAFLES and LALVGLILPGTVLMAGLGALI. Topologically, residues 50-58 are periplasmic; the sequence is GSGELSFWH. A helical transmembrane segment spans residues 59-79; it reads AWLAGIIGCLMGDWISFWLGW. The Cytoplasmic portion of the chain corresponds to 80–144; sequence RFKKPLHRWS…LPVAKFITPN (65 aa). Residues 145–165 traverse the membrane as a helical segment; that stretch reads IIGCLLWPPFYFLPGILAGAA. The Periplasmic segment spans residues 166 to 178; that stretch reads IDIPAGMQSGEFK. A helical membrane pass occupies residues 179 to 199; the sequence is WLLLATAVFLWVGGWLCWRLW. Over 200–215 the chain is Cytoplasmic; sequence RSGKATDRLSHYLSRG. Residues 216-236 traverse the membrane as a helical segment; that stretch reads RLLWLTPLISAIGVVALVVLI. At 237–254 the chain is on the periplasmic side; that stretch reads RHPLMPVYIDILRKVVGV.

It belongs to the DedA family.

Its subcellular location is the cell inner membrane. The chain is Inner membrane protein YabI (yabI) from Escherichia coli (strain K12).